The chain runs to 100 residues: uncharacterized protein (100 aa).

In terms of domain architecture, HTH arsR-type spans 8–100 (MKQSDDQIRA…TYLPGFLETL (93 aa)). The segment at residues 44–67 (CGEVGEKCNIVKTTASYHFKTLRE) is a DNA-binding region (H-T-H motif).

This is an uncharacterized protein from Bacillus subtilis (strain 168).